The chain runs to 602 residues: Elongation factor 4 (602 aa).

Residues 2 to 184 enclose the tr-type G domain; that stretch reads KKIRNFAIIA…RIVRDIPPPK (183 aa). Residues 14 to 19 and 131 to 134 each bind GTP; these read DHGKST and NKID.

Belongs to the TRAFAC class translation factor GTPase superfamily. Classic translation factor GTPase family. LepA subfamily.

The protein localises to the cell membrane. It catalyses the reaction GTP + H2O = GDP + phosphate + H(+). Functionally, required for accurate and efficient protein synthesis under certain stress conditions. May act as a fidelity factor of the translation reaction, by catalyzing a one-codon backward translocation of tRNAs on improperly translocated ribosomes. Back-translocation proceeds from a post-translocation (POST) complex to a pre-translocation (PRE) complex, thus giving elongation factor G a second chance to translocate the tRNAs correctly. Binds to ribosomes in a GTP-dependent manner. This chain is Elongation factor 4, found in Baumannia cicadellinicola subsp. Homalodisca coagulata.